Here is a 537-residue protein sequence, read N- to C-terminus: Probable protein kinase UbiB (537 aa).

Residues 30–47 (LLPWWLRALGYLLPWRWL) traverse the membrane as a helical segment. In terms of domain architecture, Protein kinase spans 126–490 (RFDSEPLASA…KRERHDHHLL (365 aa)). Residues 132–140 (LASASVAQV) and K154 contribute to the ATP site. D289 functions as the Proton acceptor in the catalytic mechanism. 2 helical membrane-spanning segments follow: residues 489–507 (LLRL…LALQ) and 513–530 (ANAW…YLLV).

It belongs to the ABC1 family. UbiB subfamily.

It is found in the cell inner membrane. The protein operates within cofactor biosynthesis; ubiquinone biosynthesis [regulation]. Is probably a protein kinase regulator of UbiI activity which is involved in aerobic coenzyme Q (ubiquinone) biosynthesis. The polypeptide is Probable protein kinase UbiB (Azotobacter vinelandii (strain DJ / ATCC BAA-1303)).